We begin with the raw amino-acid sequence, 219 residues long: 2-hydroxy-3-keto-5-methylthiopentenyl-1-phosphate phosphatase (219 aa).

Belongs to the HAD-like hydrolase superfamily. MtnX family.

It catalyses the reaction 2-hydroxy-5-methylsulfanyl-3-oxopent-1-enyl phosphate + H2O = 1,2-dihydroxy-5-(methylsulfanyl)pent-1-en-3-one + phosphate. The protein operates within amino-acid biosynthesis; L-methionine biosynthesis via salvage pathway; L-methionine from S-methyl-5-thio-alpha-D-ribose 1-phosphate: step 4/6. Dephosphorylates 2-hydroxy-3-keto-5-methylthiopentenyl-1-phosphate (HK-MTPenyl-1-P) yielding 1,2-dihydroxy-3-keto-5-methylthiopentene (DHK-MTPene). The polypeptide is 2-hydroxy-3-keto-5-methylthiopentenyl-1-phosphate phosphatase (Exiguobacterium sibiricum (strain DSM 17290 / CCUG 55495 / CIP 109462 / JCM 13490 / 255-15)).